A 173-amino-acid chain; its full sequence is dCTP deaminase, dUMP-forming (173 aa).

Residues arginine 93–arginine 98, aspartate 111, threonine 119–glutamate 121, and glutamine 138 each bind dCTP. Residue glutamate 121 is the Proton donor/acceptor of the active site.

This sequence belongs to the dCTP deaminase family. In terms of assembly, homotrimer.

The catalysed reaction is dCTP + 2 H2O = dUMP + NH4(+) + diphosphate. It participates in pyrimidine metabolism; dUMP biosynthesis; dUMP from dCTP: step 1/1. Functionally, bifunctional enzyme that catalyzes both the deamination of dCTP to dUTP and the hydrolysis of dUTP to dUMP without releasing the toxic dUTP intermediate. This is dCTP deaminase, dUMP-forming from Leptospira borgpetersenii serovar Hardjo-bovis (strain JB197).